A 423-amino-acid chain; its full sequence is Glutamyl-tRNA reductase (423 aa).

Substrate contacts are provided by residues 49-52 (TCNR), S107, 112-114 (EPQ), and Q118. Catalysis depends on C50, which acts as the Nucleophile. Residue 187 to 192 (GAGETI) coordinates NADP(+).

This sequence belongs to the glutamyl-tRNA reductase family. As to quaternary structure, homodimer.

The catalysed reaction is (S)-4-amino-5-oxopentanoate + tRNA(Glu) + NADP(+) = L-glutamyl-tRNA(Glu) + NADPH + H(+). Its pathway is porphyrin-containing compound metabolism; protoporphyrin-IX biosynthesis; 5-aminolevulinate from L-glutamyl-tRNA(Glu): step 1/2. Functionally, catalyzes the NADPH-dependent reduction of glutamyl-tRNA(Glu) to glutamate 1-semialdehyde (GSA). The protein is Glutamyl-tRNA reductase of Pseudoalteromonas atlantica (strain T6c / ATCC BAA-1087).